We begin with the raw amino-acid sequence, 121 residues long: UPF0102 protein BF0706 (121 aa).

This sequence belongs to the UPF0102 family.

This chain is UPF0102 protein BF0706, found in Bacteroides fragilis (strain YCH46).